A 650-amino-acid polypeptide reads, in one-letter code: Transcription factor LHW (650 aa).

2 disordered regions span residues 381–417 and 431–470; these read LTKVSNSSVTTPSHSSPQGSQLFEKKHGQPLGPSSVY and LKREGSPRMVNKNETAKPANNRKRLKPGENPRPRPKDRQM. Over residues 384–397 the composition is skewed to low complexity; it reads VSNSSVTTPSHSSP. Positions 451–458 match the Nuclear localization signal motif; it reads NRKRLKPG. The bHLH domain maps to 455 to 504; that stretch reads LKPGENPRPRPKDRQMIQDRVKELREIIPNGAKCSIDALLERTIKHMLFL. A compositionally biased stretch (basic and acidic residues) spans 456 to 470; that stretch reads KPGENPRPRPKDRQM.

Belongs to the bHLH protein family. LHW subfamily. Homodimer. Can also interact with bHLH proteins. Expressed in both root and shoot meristems. Present in root tips.

It localises to the nucleus. In terms of biological role, transcription activator that regulates root development; promotes the production of stele cells in roots. Coordinately controls the number of all vascular cell types by regulating the size of the pool of cells from which they arise. The chain is Transcription factor LHW (LHW) from Arabidopsis thaliana (Mouse-ear cress).